Reading from the N-terminus, the 66-residue chain is U8-myrmicitoxin-Tb1a (66 aa).

Positions 1 to 26 are cleaved as a signal peptide; sequence MKLSFLSLAFAVIFVMAIMYAPQVEA. A propeptide spanning residues 27–50 is cleaved from the precursor; the sequence is KASADADADADAAASADALAKASA.

As to expression, expressed by the venom gland.

It localises to the secreted. Its function is as follows. In vivo, this neurotoxin paralyzes about 50% of blowflies (L.caesar) one hour after intrathoracic injection, when tested at high doses (54 nmol/g). In Tetramorium bicarinatum (Tramp ant), this protein is U8-myrmicitoxin-Tb1a.